The following is a 1715-amino-acid chain: Sodium channel protein type 4 subunit alpha B (1715 aa).

Residues 1–126 are Cytoplasmic-facing; it reads MGTLLPPVGS…IFAIKILVHS (126 aa). An I repeat occupies 108–431; it reads LLSPFNSMRI…VVAMAYAEQN (324 aa). The chain crosses the membrane as a helical span at residues 127-145; sequence LFSLFIMATILTNCVFMTL. Residues 146 to 152 lie on the Extracellular side of the membrane; it reads SDPPAWS. A helical transmembrane segment spans residues 153–173; it reads KTVEYVFTFIYTFEATIKVVS. Residues 174 to 187 are Cytoplasmic-facing; the sequence is RGFCVGQFTFLKDP. The chain crosses the membrane as a helical span at residues 188 to 205; that stretch reads WNWLDFMVISMAYLTELV. At 206 to 211 the chain is on the extracellular side; sequence DLGNVS. The N-linked (GlcNAc...) asparagine glycan is linked to Asn209. The chain crosses the membrane as a helical span at residues 212–228; the sequence is VLRTFRVLRALKTITVI. Residues 229–247 lie on the Cytoplasmic side of the membrane; sequence PGLKTIVGALIQSVKKLAD. The chain crosses the membrane as a helical span at residues 248–267; it reads AMVLTVFCLSVFALIGLQLF. Over 268 to 368 the chain is Extracellular; that stretch reads MGNLRQKCVL…PNYGYTSYDS (101 aa). Cys275 and Cys337 are oxidised to a cystine. Asn284, Asn304, and Asn339 each carry an N-linked (GlcNAc...) asparagine glycan. An intrachain disulfide couples Cys346 to Cys352. The segment at residues 369–393 is an intramembrane region (pore-forming); that stretch reads FGWAFLALFRLMTQDFWENLFQLTL. The Extracellular portion of the chain corresponds to 394 to 400; that stretch reads RAAGKTY. A helical membrane pass occupies residues 401–421; it reads MIFFVVVIFLGSFYLINLILA. Residues 422–515 are Cytoplasmic-facing; it reads VVAMAYAEQN…RCLSAIVMDP (94 aa). An II repeat occupies 497-768; the sequence is CCSCWRHLKR…QIAVNRIKRA (272 aa). A helical membrane pass occupies residues 516–534; that stretch reads FVDLGITICIILNTIFMAM. At 535–545 the chain is on the extracellular side; the sequence is EHYPMSADFEE. The helical transmembrane segment at 546-565 threads the bilayer; sequence LLSVGNLVFTGIFTCEMVLK. Residues 566–579 lie on the Cytoplasmic side of the membrane; sequence ILAMDPYFYFQVGW. Residues 580–599 traverse the membrane as a helical segment; it reads NIFDSIIVTMSLVELGLANV. Residues 600-601 are Extracellular-facing; it reads QG. A helical membrane pass occupies residues 602–619; the sequence is LSVLRSFRLMRVFKLAKS. Topologically, residues 620-635 are cytoplasmic; sequence WPTLNMLIKIIGNSVG. A helical transmembrane segment spans residues 636–654; it reads ALGNLTLVLAIIVFIFAVV. The Extracellular portion of the chain corresponds to 655–683; sequence GMQLFGKNYKDCVCRISEDCKLPRWHMND. Cys668 and Cys674 are oxidised to a cystine. The segment at residues 684–704 is an intramembrane region (pore-forming); sequence FFHAFLIIFRVLCGEWIDTMW. The Extracellular segment spans residues 705–715; the sequence is DCMEVSGQTMC. Cys706 and Cys715 form a disulfide bridge. The helical transmembrane segment at 716–734 threads the bilayer; sequence LIVYMMVLVIGNLVVLNLF. Residues 735–915 are Cytoplasmic-facing; the sequence is LALLLSSFSG…ACFIIVENNY (181 aa). The disordered stretch occupies residues 824–865; the sequence is EAESDSEDSDDDDVDEDKHSRCDESSFCSTVQDPEVKENEAD. The span at 825–838 shows a compositional bias: acidic residues; it reads AESDSEDSDDDDVD. The III repeat unit spans residues 896–1211; the sequence is KGKVWCNIRR…KKYYNAMKKL (316 aa). Residues 916-933 form a helical membrane-spanning segment; the sequence is FESFIVFMILLSSGALAF. Over 934–946 the chain is Extracellular; sequence EDIYLEKHQLIKT. The chain crosses the membrane as a helical span at residues 947-965; the sequence is ILEYADKVFTYVFVVEMVL. Topologically, residues 966–979 are cytoplasmic; sequence KWFAYGFKSYFSNA. Residues 980–998 traverse the membrane as a helical segment; the sequence is WCWLDFLIVDVSLVSLTAN. The Extracellular segment spans residues 999-1006; the sequence is ILGYSELG. A helical membrane pass occupies residues 1007 to 1025; sequence AIKSLRTLRALRPLRALSR. Residues 1026 to 1042 lie on the Cytoplasmic side of the membrane; the sequence is FEGMRVVVNALVGAVPS. A helical membrane pass occupies residues 1043–1062; sequence IFNVLLVCLIFWLIFSIMGV. The Extracellular segment spans residues 1063 to 1115; that stretch reads NLFAGKFSYCFNETSQEQFDKKIVNNKTECIALIEANFTEVRWKNLKVNYDNV. A disulfide bridge links Cys1072 with Cys1092. 2 N-linked (GlcNAc...) asparagine glycosylation sites follow: Asn1074 and Asn1088. The pore-forming intramembrane region spans 1116-1137; sequence GIGYLSLLQVATFKGWMEIMYA. The Extracellular portion of the chain corresponds to 1138-1154; that stretch reads AVDSRDVESQPIYEVNI. Residues 1155-1176 traverse the membrane as a helical segment; the sequence is YMYLYFVIFIIFGSFFTLNLFI. Over 1177–1239 the chain is Cytoplasmic; it reads GVIIDNFNQQ…LVFDLVTKQI (63 aa). Positions 1195 to 1197 are important for rapid channel inactivation; sequence IFM. Residues 1220–1517 form an IV repeat; sequence VPRPENALQG…WEKFDPDATQ (298 aa). A helical transmembrane segment spans residues 1240 to 1257; sequence FDVFIMVLICLNMVTMMV. At 1258–1268 the chain is on the extracellular side; sequence ETDEQTKEKED. Residues 1269–1287 form a helical membrane-spanning segment; it reads ILYWINVIFIVIFTTECIL. Topologically, residues 1288-1299 are cytoplasmic; the sequence is KTIALRRHYFSI. Residues 1300–1317 form a helical membrane-spanning segment; the sequence is GWNVFDFVVVILSILGLL. Topologically, residues 1318–1330 are extracellular; that stretch reads LADIIEKYFVSPT. The chain crosses the membrane as a helical span at residues 1331 to 1347; sequence LFRVIRLARIGRVLRLI. The Cytoplasmic portion of the chain corresponds to 1348–1366; the sequence is RGAKGIRTLLFALMMSLPA. Residues 1367 to 1384 form a helical membrane-spanning segment; it reads LFNIGLLLFLIMFIFSIF. The Extracellular portion of the chain corresponds to 1385–1406; the sequence is GMSNFAYVKKEAMIDDMFNFET. The segment at residues 1407-1429 is an intramembrane region (pore-forming); sequence FGNSMICLFMITTSAGWDGLLSP. Residues 1430-1458 lie on the Extracellular side of the membrane; sequence IMNKPPDCDPDLENPGTTVRGNCGSPAIG. Cys1437 and Cys1452 form a disulfide bridge. A helical membrane pass occupies residues 1459–1481; that stretch reads IVFFSTYIIMSFLVVVNMYIAII. Residues 1482-1715 lie on the Cytoplasmic side of the membrane; it reads LENFNVATEE…LGTSERESLV (234 aa). One can recognise an IQ domain in the interval 1611–1640; the sequence is EEVAARVIQRAYRKYLLQRTVRLASFTYRE.

This sequence belongs to the sodium channel (TC 1.A.1.10) family. Nav1.4/SCN4A subfamily. Voltage-gated sodium (Nav) channels consist of an ion-conducting alpha subunit which is functional on its own associated with regulatory beta subunits.

The protein resides in the cell membrane. It catalyses the reaction Na(+)(in) = Na(+)(out). Functionally, pore-forming subunit of a voltage-gated sodium (Nav) channel that directly mediates the depolarizing phase of action potentials in excitable membranes. Navs, also called VGSCs (voltage-gated sodium channels) or VDSCs (voltage-dependent sodium channels), operate by switching between closed and open conformations depending on the voltage difference across the membrane. In the open conformation they allow Na(+) ions to selectively pass through the pore, along their electrochemical gradient. The influx of Na+ ions provokes membrane depolarization, initiating the propagation of electrical signals throughout cells and tissues. The sequence is that of Sodium channel protein type 4 subunit alpha B (scn4ab) from Tetraodon nigroviridis (Spotted green pufferfish).